A 502-amino-acid polypeptide reads, in one-letter code: Glutamate dehydrogenase, mitochondrial (502 aa).

96 to 98 (HHR) is an NAD(+) binding site. Substrate-binding residues include Lys-102 and Lys-126. Residue Asp-131 participates in NAD(+) binding. The active site involves Lys-138. Ser-394 is a substrate binding site.

It belongs to the Glu/Leu/Phe/Val dehydrogenases family. In terms of assembly, homohexamer.

It localises to the mitochondrion matrix. It carries out the reaction L-glutamate + NAD(+) + H2O = 2-oxoglutarate + NH4(+) + NADH + H(+). The enzyme catalyses L-glutamate + NADP(+) + H2O = 2-oxoglutarate + NH4(+) + NADPH + H(+). Its activity is regulated as follows. Subject to allosteric regulation. Activated by AMP and ADP. This chain is Glutamate dehydrogenase, mitochondrial (gluD), found in Dictyostelium discoideum (Social amoeba).